Consider the following 454-residue polypeptide: Asparagine--tRNA ligase (454 aa).

The protein belongs to the class-II aminoacyl-tRNA synthetase family. In terms of assembly, homodimer.

It localises to the cytoplasm. The catalysed reaction is tRNA(Asn) + L-asparagine + ATP = L-asparaginyl-tRNA(Asn) + AMP + diphosphate + H(+). This Ureaplasma urealyticum serovar 10 (strain ATCC 33699 / Western) protein is Asparagine--tRNA ligase.